The following is a 390-amino-acid chain: GTPase Obg (390 aa).

An Obg domain is found at 1-159 (MKFVDEASVK…RELRLELLLL (159 aa)). The region spanning 160-333 (ADVGMLGLPN…LCFKLGEFME (174 aa)) is the OBG-type G domain. GTP is bound by residues 166-173 (GLPNAGKS), 191-195 (FTTLI), 213-216 (DIPG), 283-286 (NKVD), and 314-316 (SAV). Mg(2+) contacts are provided by S173 and T193.

This sequence belongs to the TRAFAC class OBG-HflX-like GTPase superfamily. OBG GTPase family. Monomer. The cofactor is Mg(2+).

The protein localises to the cytoplasm. Functionally, an essential GTPase which binds GTP, GDP and possibly (p)ppGpp with moderate affinity, with high nucleotide exchange rates and a fairly low GTP hydrolysis rate. Plays a role in control of the cell cycle, stress response, ribosome biogenesis and in those bacteria that undergo differentiation, in morphogenesis control. This Vibrio atlanticus (strain LGP32) (Vibrio splendidus (strain Mel32)) protein is GTPase Obg.